Here is a 340-residue protein sequence, read N- to C-terminus: Alcohol dehydrogenase (340 aa).

7 residues coordinate Zn(2+): C37, H58, C89, C92, C95, C103, and C145.

Belongs to the zinc-containing alcohol dehydrogenase family. The cofactor is Zn(2+).

It carries out the reaction a primary alcohol + NAD(+) = an aldehyde + NADH + H(+). The enzyme catalyses a secondary alcohol + NAD(+) = a ketone + NADH + H(+). In Staphylococcus epidermidis (strain ATCC 12228 / FDA PCI 1200), this protein is Alcohol dehydrogenase (adh).